The primary structure comprises 540 residues: Pentatricopeptide repeat-containing protein At1g80880, mitochondrial (540 aa).

A mitochondrion-targeting transit peptide spans 1–87 (MAAIVAIGRK…ETFDINLTAL (87 aa)). PPR repeat units follow at residues 154–184 (DQKS…MFNV), 188–222 (TRKA…KHTP), 223–253 (YDEA…SKKL), 257–292 (DVEG…CITP), 293–327 (NKDS…GLAP), 328–362 (GIEV…GLKP), 363–397 (DSVT…NLSP), 402–428 (FHAF…DLGP), 429–463 (TEET…EIVA), and 464–498 (NPAL…GFVG). The disordered stretch occupies residues 514-540 (VRKSKRMNLQKVGSQEGYKGQRSVDRK).

It belongs to the PPR family. P subfamily.

Its subcellular location is the mitochondrion. This Arabidopsis thaliana (Mouse-ear cress) protein is Pentatricopeptide repeat-containing protein At1g80880, mitochondrial.